The sequence spans 604 residues: Elongation factor 4 (604 aa).

Residues 4 to 186 enclose the tr-type G domain; the sequence is EFIRNFSIIA…AIVHLVPPPK (183 aa). GTP contacts are provided by residues 16–21 and 133–136; these read DHGKST and NKID.

The protein belongs to the TRAFAC class translation factor GTPase superfamily. Classic translation factor GTPase family. LepA subfamily.

It localises to the cell inner membrane. It catalyses the reaction GTP + H2O = GDP + phosphate + H(+). In terms of biological role, required for accurate and efficient protein synthesis under certain stress conditions. May act as a fidelity factor of the translation reaction, by catalyzing a one-codon backward translocation of tRNAs on improperly translocated ribosomes. Back-translocation proceeds from a post-translocation (POST) complex to a pre-translocation (PRE) complex, thus giving elongation factor G a second chance to translocate the tRNAs correctly. Binds to ribosomes in a GTP-dependent manner. This is Elongation factor 4 from Solibacter usitatus (strain Ellin6076).